The sequence spans 317 residues: Acetyl-coenzyme A carboxylase carboxyl transferase subunit alpha (317 aa).

The CoA carboxyltransferase C-terminal domain occupies 37 to 291; that stretch reads KLQEKVDKLL…GNAIEDALDD (255 aa).

The protein belongs to the AccA family. As to quaternary structure, acetyl-CoA carboxylase is a heterohexamer composed of biotin carboxyl carrier protein (AccB), biotin carboxylase (AccC) and two subunits each of ACCase subunit alpha (AccA) and ACCase subunit beta (AccD).

It localises to the cytoplasm. The enzyme catalyses N(6)-carboxybiotinyl-L-lysyl-[protein] + acetyl-CoA = N(6)-biotinyl-L-lysyl-[protein] + malonyl-CoA. It functions in the pathway lipid metabolism; malonyl-CoA biosynthesis; malonyl-CoA from acetyl-CoA: step 1/1. In terms of biological role, component of the acetyl coenzyme A carboxylase (ACC) complex. First, biotin carboxylase catalyzes the carboxylation of biotin on its carrier protein (BCCP) and then the CO(2) group is transferred by the carboxyltransferase to acetyl-CoA to form malonyl-CoA. The sequence is that of Acetyl-coenzyme A carboxylase carboxyl transferase subunit alpha from Rhodospirillum centenum (strain ATCC 51521 / SW).